The following is a 188-amino-acid chain: Pyridoxal 5'-phosphate synthase subunit PdxT (188 aa).

Residue 46 to 48 coordinates L-glutamine; it reads GES. Cys78 serves as the catalytic Nucleophile. L-glutamine is bound by residues Arg105 and 134-135; that span reads IR. Active-site charge relay system residues include His170 and Glu172.

Belongs to the glutaminase PdxT/SNO family. In the presence of PdxS, forms a dodecamer of heterodimers. Only shows activity in the heterodimer.

It catalyses the reaction aldehydo-D-ribose 5-phosphate + D-glyceraldehyde 3-phosphate + L-glutamine = pyridoxal 5'-phosphate + L-glutamate + phosphate + 3 H2O + H(+). It carries out the reaction L-glutamine + H2O = L-glutamate + NH4(+). It functions in the pathway cofactor biosynthesis; pyridoxal 5'-phosphate biosynthesis. In terms of biological role, catalyzes the hydrolysis of glutamine to glutamate and ammonia as part of the biosynthesis of pyridoxal 5'-phosphate. The resulting ammonia molecule is channeled to the active site of PdxS. This chain is Pyridoxal 5'-phosphate synthase subunit PdxT, found in Thermotoga petrophila (strain ATCC BAA-488 / DSM 13995 / JCM 10881 / RKU-1).